Reading from the N-terminus, the 425-residue chain is UDP-N-acetylglucosamine 1-carboxyvinyltransferase (425 aa).

22-23 (KN) lines the phosphoenolpyruvate pocket. Arg-93 serves as a coordination point for UDP-N-acetyl-alpha-D-glucosamine. The active-site Proton donor is the Asp-117. UDP-N-acetyl-alpha-D-glucosamine contacts are provided by Asp-312 and Met-334.

It belongs to the EPSP synthase family. MurA subfamily.

The protein localises to the cytoplasm. The catalysed reaction is phosphoenolpyruvate + UDP-N-acetyl-alpha-D-glucosamine = UDP-N-acetyl-3-O-(1-carboxyvinyl)-alpha-D-glucosamine + phosphate. Its pathway is cell wall biogenesis; peptidoglycan biosynthesis. Functionally, cell wall formation. Adds enolpyruvyl to UDP-N-acetylglucosamine. The protein is UDP-N-acetylglucosamine 1-carboxyvinyltransferase of Treponema pallidum (strain Nichols).